Reading from the N-terminus, the 307-residue chain is Transmembrane protein 200B (307 aa).

Residues 1 to 38 form a disordered region; sequence MTAGSPEECGEVRRSPEGRVSRLGRRLGRRRRPRSPPE. Residues 10–20 are compositionally biased toward basic and acidic residues; the sequence is GEVRRSPEGRV. The segment covering 22–34 has biased composition (basic residues); sequence RLGRRLGRRRRPR. The chain crosses the membrane as a helical span at residues 53–73; the sequence is GAFAALGALVVLVGMGIAVAG. The disordered stretch occupies residues 81-111; it reads APGSRAANASSPQMSELRREGRGGGRAHGPH. Asparagine 88 carries an N-linked (GlcNAc...) asparagine glycan. The segment covering 96–111 has biased composition (basic and acidic residues); the sequence is ELRREGRGGGRAHGPH. A helical transmembrane segment spans residues 116–136; sequence LLGPVIMGVGLFVFICANTLL. The segment at 180–211 is disordered; sequence AVGCAEPEIWDPSPRRGTSPVPSVRSLRSEPA.

The protein belongs to the TMEM200 family.

Its subcellular location is the membrane. This chain is Transmembrane protein 200B (TMEM200B), found in Homo sapiens (Human).